Reading from the N-terminus, the 324-residue chain is Delta-aminolevulinic acid dehydratase (324 aa).

Zn(2+) contacts are provided by C118, C120, and C128. The active-site Schiff-base intermediate with substrate is K195. 5-aminolevulinate is bound by residues R205 and R217. Position 233 (E233) interacts with Mg(2+). Catalysis depends on K248, which acts as the Schiff-base intermediate with substrate. Positions 274 and 313 each coordinate 5-aminolevulinate.

The protein belongs to the ALAD family. In terms of assembly, homooctamer. It depends on Zn(2+) as a cofactor.

It catalyses the reaction 2 5-aminolevulinate = porphobilinogen + 2 H2O + H(+). It participates in porphyrin-containing compound metabolism; protoporphyrin-IX biosynthesis; coproporphyrinogen-III from 5-aminolevulinate: step 1/4. Catalyzes an early step in the biosynthesis of tetrapyrroles. Binds two molecules of 5-aminolevulinate per subunit, each at a distinct site, and catalyzes their condensation to form porphobilinogen. This Staphylococcus aureus (strain NCTC 8325 / PS 47) protein is Delta-aminolevulinic acid dehydratase (hemB).